The chain runs to 491 residues: UDP-N-acetylmuramate--L-alanine ligase (491 aa).

126 to 132 serves as a coordination point for ATP; sequence GTHGKTT.

This sequence belongs to the MurCDEF family.

The protein resides in the cytoplasm. It carries out the reaction UDP-N-acetyl-alpha-D-muramate + L-alanine + ATP = UDP-N-acetyl-alpha-D-muramoyl-L-alanine + ADP + phosphate + H(+). It functions in the pathway cell wall biogenesis; peptidoglycan biosynthesis. Its function is as follows. Cell wall formation. This Shigella dysenteriae serotype 1 (strain Sd197) protein is UDP-N-acetylmuramate--L-alanine ligase.